Consider the following 241-residue polypeptide: Glycerol-3-phosphate acyltransferase (241 aa).

A run of 6 helical transmembrane segments spans residues Ile-3 to Ser-23, Ile-63 to Val-83, Tyr-97 to Tyr-117, Leu-131 to Val-151, Ile-156 to Trp-176, and Leu-198 to Val-218.

It belongs to the PlsY family. Probably interacts with PlsX.

Its subcellular location is the cell membrane. It carries out the reaction an acyl phosphate + sn-glycerol 3-phosphate = a 1-acyl-sn-glycero-3-phosphate + phosphate. It functions in the pathway lipid metabolism; phospholipid metabolism. Its function is as follows. Catalyzes the transfer of an acyl group from acyl-phosphate (acyl-PO(4)) to glycerol-3-phosphate (G3P) to form lysophosphatidic acid (LPA). This enzyme utilizes acyl-phosphate as fatty acyl donor, but not acyl-CoA or acyl-ACP. The protein is Glycerol-3-phosphate acyltransferase of Mycoplasmopsis agalactiae (strain NCTC 10123 / CIP 59.7 / PG2) (Mycoplasma agalactiae).